The sequence spans 550 residues: Cytochrome P450 monooxygenase hasH (550 aa).

A helical transmembrane segment spans residues 39 to 59 (IGVLASIVVLVTVVIGPKAVI). Cys-493 contributes to the heme binding site.

This sequence belongs to the cytochrome P450 family. Heme serves as cofactor.

It localises to the membrane. The protein operates within secondary metabolite biosynthesis. Cytochrome P450 monooxygenase; part of the gene cluster that mediates the biosynthesis of hexadehydro-astechrome (HAS), a tryptophan-derived iron(III)-complex that acts as a virulence factor in infected mice. Within the pathway, hasH, with the O-methyltransferase hasC and the FAD-linked oxidoreductase hasG, convert the hasE-prenylated Trp-Ala dipeptide into an O-methylated diketopiperazine that is then released from the hasD NRPS. The HAS biosynthesis begins with the synthesis of a tethered Trp-Ala dipeptide by the NRPS hasD. The 7-dimethylallyltryptophan synthase hasE then catalyzes the prenylation of the hasD-tethered tryptophan or the resulting tethered Trp-Ala dipeptide at the C-7 position of the indole moiety. HAS biosynthesis continues via tethered intermediates with the succesive action of the cytochrome P450 monooxygenase hasH, the O-methyltransferase hasC, and the FAD-linked oxidoreductase hasG. The resulting O-methylated diketopiperazine is then released from hasD. Finally, three O-methylated diketopiperazine molecules assemble in a trimeric complex with Fe(III) to produce hexadehydro-astechrome. This is Cytochrome P450 monooxygenase hasH from Aspergillus fumigatus (strain CBS 144.89 / FGSC A1163 / CEA10) (Neosartorya fumigata).